A 512-amino-acid polypeptide reads, in one-letter code: MKLQTSADLQRWLQAGGPGPLHLVPTMGALHQGHAALIRAARQQGGRVLVSVFVNPLQFSPNEDFARYPRRLEEDHALALEAGADALWAPQPEDVFPAGAAGLTQLAPAPELVANLCGPSRPGHFEGVCTVVSRLLALVQPSHLHLGEKDWQQLQVLRRLVRDLRWPVQIVPCPTLRERDGLPLSSRNAYLSVEQRQQAALLPQALAQGQQLLDAGQRQAEPLLRAVRALMEDGGLAVDYLQLVDLPRLQELEQVTGPALLAAAVRCGEARLIDHRVLMSRLPILAIDGPAGAGKSTVTRQVAHELGLTYLDTGAMYRGVTWLLQQRGFEPQEGEPLQALLADLELRFGPASGTEQTLLVNGVDATSAIRTAEVTASVSAVAALPSVRAALTQQQQQLGQQGGLVAEGRDIGTAVFPDAELKIYLTATVAERARRRAADLAARSLPVPVLSQLEQEIADRDHKDSSREVAPLRQASDAVELLSDGLSIDEVVAQIVALFREWVPVEALNADA.

Positions 1–276 are pantoate--beta-alanine ligase; sequence MKLQTSADLQ…CGEARLIDHR (276 aa). Residue 27–34 participates in ATP binding; that stretch reads MGALHQGH. Residue histidine 34 is the Proton donor of the active site. A (R)-pantoate-binding site is contributed by glutamine 58. Glutamine 58 is a binding site for beta-alanine. 147–150 is an ATP binding site; it reads GEKD. Glutamine 153 is a binding site for (R)-pantoate. Residues leucine 176 and 184 to 187 each bind ATP; that span reads LSSR. Residues 277–512 form a cytidylate kinase region; it reads VLMSRLPILA…VPVEALNADA (236 aa).

This sequence in the N-terminal section; belongs to the pantothenate synthetase family. It in the C-terminal section; belongs to the cytidylate kinase family. Type 1 subfamily.

The protein localises to the cytoplasm. It carries out the reaction (R)-pantoate + beta-alanine + ATP = (R)-pantothenate + AMP + diphosphate + H(+). It catalyses the reaction CMP + ATP = CDP + ADP. The catalysed reaction is dCMP + ATP = dCDP + ADP. The protein operates within cofactor biosynthesis; (R)-pantothenate biosynthesis; (R)-pantothenate from (R)-pantoate and beta-alanine: step 1/1. In terms of biological role, catalyzes the condensation of pantoate with beta-alanine in an ATP-dependent reaction via a pantoyl-adenylate intermediate. Functionally, catalyzes the transfer of a phosphate group from ATP to either CMP or dCMP to form CDP or dCDP and ADP, respectively. The protein is Bifunctional pantoate ligase/cytidylate kinase of Synechococcus sp. (strain RCC307).